Consider the following 413-residue polypeptide: MAKEKTHMNLAFIGHVDHGKSTLVGHLLLLEGAIAEQQLDEGEDKFRFVMDKLGEERERGVTIDLAHAKFETQKYEYTVVDCPGHRDFVKNMITGASQADAAVLVVAANDGIMPQTKEHIFLSRTLGINQLIIAINKMDVVDYSEDKFNELKEELGALISTVGFKPSDVPFIPVSAFEGDNISEKSSNTPWYKGNTLVQELDALDEPDKPVDLPLRLPIQDVYSITGVGTVPVGRIETGILKTAENIAFEPAGVTGEVKSIEMHHEVLDKAEPGDNVGFNVRGVGKNDIKRGDVAGTTQNPPSVAKEFKAQIVVLQHPGVMTVGYTPVFHAHTAQVACTFLSLDVKLDPATGQPKEENPDFLKTGDAALVTIKPTKPMVIENIKEIPHMGRFAIRDMGQTVAAGMCIDITDAK.

The tr-type G domain maps to 5–211 (KTHMNLAFIG…DALDEPDKPV (207 aa)). Positions 14 to 21 (GHVDHGKS) are G1. Residue 14-21 (GHVDHGKS) coordinates GTP. Position 21 (Ser-21) interacts with Mg(2+). Residues 60–64 (GVTID) form a G2 region. Residues 81–84 (DCPG) are G3. Residues 81–85 (DCPGH) and 136–139 (NKMD) each bind GTP. Positions 136–139 (NKMD) are G4. Residues 175–177 (SAF) are G5.

Belongs to the TRAFAC class translation factor GTPase superfamily. Classic translation factor GTPase family. EF-Tu/EF-1A subfamily.

It is found in the cytoplasm. The enzyme catalyses GTP + H2O = GDP + phosphate + H(+). Its function is as follows. GTP hydrolase that promotes the GTP-dependent binding of aminoacyl-tRNA to the A-site of ribosomes during protein biosynthesis. The polypeptide is Elongation factor 1-alpha (Methanosphaera stadtmanae (strain ATCC 43021 / DSM 3091 / JCM 11832 / MCB-3)).